Consider the following 678-residue polypeptide: Vacuolar protein sorting-associated protein 1 (678 aa).

A Dynamin-type G domain is found at 24–311; the sequence is LIDLPQITVV…LMHHIRNTLP (288 aa). Positions 34 to 41 are G1 motif; that stretch reads RSQSSGKS. 34-41 contacts GTP; the sequence is RSQSSGKS. The G2 motif stretch occupies residues 60 to 62; sequence VTR. The tract at residues 71–96 is disordered; it reads NRPSASGKNEETTTDSDGKDQNNSSE. Residues 78 to 90 are compositionally biased toward basic and acidic residues; sequence KNEETTTDSDGKD. Residues 153 to 156 form a G3 motif region; it reads DLPG. GTP contacts are provided by residues 153–157 and 222–225; these read DLPGL and TKVD. The tract at residues 222–225 is G4 motif; sequence TKVD. Positions 252–255 are G5 motif; sequence INRG. Residues 592–678 enclose the GED domain; sequence TEVIKLLIMS…LQASEIVSNV (87 aa).

It belongs to the TRAFAC class dynamin-like GTPase superfamily. Dynamin/Fzo/YdjA family.

The sequence is that of Vacuolar protein sorting-associated protein 1 (vps1) from Schizosaccharomyces pombe (strain 972 / ATCC 24843) (Fission yeast).